Consider the following 374-residue polypeptide: Heat stress transcription factor A-8 (374 aa).

The DNA-binding element occupies 17 to 112 (VAPFLRKCYD…LLKNVIRRKN (96 aa)). A hydrophobic repeat HR-A/B region spans residues 126-192 (TTYAQEKSGL…EMLSFLVMVM (67 aa)). The AHA1 motif lies at 285–294 (DGAWEKLLLL). Residues 298-303 (RKKTKK) carry the Nuclear localization signal motif. An AHA2 motif is present at residues 330-339 (KSYMLKLISE). Residues 363–370 (LTEQMELL) carry the Nuclear export signal motif.

The protein belongs to the HSF family. Class A subfamily. Homotrimer. Post-translationally, exhibits temperature-dependent phosphorylation.

It is found in the cytoplasm. Its subcellular location is the nucleus. Its function is as follows. Transcriptional activator that specifically binds DNA sequence 5'-AGAAnnTTCT-3' known as heat shock promoter elements (HSE). In Arabidopsis thaliana (Mouse-ear cress), this protein is Heat stress transcription factor A-8 (HSFA8).